A 271-amino-acid polypeptide reads, in one-letter code: ABC transporter I family member 10 (271 aa).

Residues 40-267 (VECRNLCFSV…IKAKQSSYID (228 aa)) enclose the ABC transporter domain. Position 77–84 (77–84 (GPNGCGKS)) interacts with ATP.

The protein belongs to the ABC transporter superfamily. ABCI family.

The sequence is that of ABC transporter I family member 10 (ABCI10) from Arabidopsis thaliana (Mouse-ear cress).